A 91-amino-acid chain; its full sequence is Potassium channel toxin TdiKIK (91 aa).

A signal peptide spans 1–25 (MVATNRCCVFALLVALLLIHSLAEA). Residues 26-44 (GKGKEVLGKIKNKLVEVKE) constitute a propeptide that is removed on maturation. The BetaSPN-type CS-alpha/beta domain occupies 58–91 (EYACPVIDKFCEDHCAAKNAIGKCDDFKCQCLNS). Cystine bridges form between Cys-61–Cys-81, Cys-68–Cys-86, and Cys-72–Cys-88.

As to expression, expressed by the venom gland.

It localises to the secreted. Functionally, the full peptide presents antibacterial and cytotoxic activities. The synthetic C-terminus (AA 33-76) inhibits voltage-gated potassium channels Kv1.1/KCNA1, Kv1.2/KCNA2, and Kv1.3/KCNA3. This chain is Potassium channel toxin TdiKIK, found in Tityus discrepans (Venezuelan scorpion).